We begin with the raw amino-acid sequence, 516 residues long: GMP synthase [glutamine-hydrolyzing] (516 aa).

Residues 5-199 (SIIVLDFGSQ…ARNICGVTEK (195 aa)) form the Glutamine amidotransferase type-1 domain. The Nucleophile role is filled by Cys-82. Catalysis depends on residues His-173 and Glu-175. The region spanning 200-391 (WKMEHFLKEQ…LGLPESMINR (192 aa)) is the GMPS ATP-PPase domain. 227 to 233 (SGGVDSS) is an ATP binding site.

As to quaternary structure, homodimer.

It carries out the reaction XMP + L-glutamine + ATP + H2O = GMP + L-glutamate + AMP + diphosphate + 2 H(+). It participates in purine metabolism; GMP biosynthesis; GMP from XMP (L-Gln route): step 1/1. Its function is as follows. Catalyzes the synthesis of GMP from XMP. The sequence is that of GMP synthase [glutamine-hydrolyzing] from Sulfurimonas denitrificans (strain ATCC 33889 / DSM 1251) (Thiomicrospira denitrificans (strain ATCC 33889 / DSM 1251)).